We begin with the raw amino-acid sequence, 444 residues long: tRNA-2-methylthio-N(6)-dimethylallyladenosine synthase (444 aa).

One can recognise an MTTase N-terminal domain in the interval 8 to 122 (KTFYIETFGC…LAEMLVQIES (115 aa)). Positions 17, 53, 85, 160, 164, and 167 each coordinate [4Fe-4S] cluster. In terms of domain architecture, Radical SAM core spans 146-376 (RGNAHRGYIT…MEHQREIQRA (231 aa)). The TRAM domain occupies 379-444 (RKHIGETIEV…PNSLVGELVG (66 aa)).

This sequence belongs to the methylthiotransferase family. MiaB subfamily. Monomer. It depends on [4Fe-4S] cluster as a cofactor.

The protein resides in the cytoplasm. The catalysed reaction is N(6)-dimethylallyladenosine(37) in tRNA + (sulfur carrier)-SH + AH2 + 2 S-adenosyl-L-methionine = 2-methylsulfanyl-N(6)-dimethylallyladenosine(37) in tRNA + (sulfur carrier)-H + 5'-deoxyadenosine + L-methionine + A + S-adenosyl-L-homocysteine + 2 H(+). Catalyzes the methylthiolation of N6-(dimethylallyl)adenosine (i(6)A), leading to the formation of 2-methylthio-N6-(dimethylallyl)adenosine (ms(2)i(6)A) at position 37 in tRNAs that read codons beginning with uridine. This is tRNA-2-methylthio-N(6)-dimethylallyladenosine synthase from Koribacter versatilis (strain Ellin345).